We begin with the raw amino-acid sequence, 233 residues long: Large ribosomal subunit protein uL1 (233 aa).

The protein belongs to the universal ribosomal protein uL1 family. Part of the 50S ribosomal subunit.

In terms of biological role, binds directly to 23S rRNA. The L1 stalk is quite mobile in the ribosome, and is involved in E site tRNA release. Functionally, protein L1 is also a translational repressor protein, it controls the translation of the L11 operon by binding to its mRNA. The chain is Large ribosomal subunit protein uL1 from Nautilia profundicola (strain ATCC BAA-1463 / DSM 18972 / AmH).